The sequence spans 688 residues: Eukaryotic translation initiation factor 3 subunit B (688 aa).

Positions 1-32 are disordered; that stretch reads MAKKKGENYDSDGGDDQDYDEEPNFDDPEGFV. Acidic residues predominate over residues 9–32; the sequence is YDSDGGDDQDYDEEPNFDDPEGFV. The RRM domain occupies 57 to 141; the sequence is NVIVVDNIPV…HTLLVNLFSD (85 aa). 6 WD repeats span residues 208–246, 247–287, 291–329, 332–367, 440–482, and 527–572; these read RDRF…KINK, FPHS…EKRS, DGTS…LLDK, IKVQ…TLLE, EVKE…EPTM, and GDHF…KRVN. A coiled-coil region spans residues 613 to 642; that stretch reads RIRMTRASKELLEKRAKLREQFVEYRTKRV.

This sequence belongs to the eIF-3 subunit B family. Component of the eukaryotic translation initiation factor 3 (eIF-3) complex.

The protein resides in the cytoplasm. In terms of biological role, RNA-binding component of the eukaryotic translation initiation factor 3 (eIF-3) complex, which is involved in protein synthesis of a specialized repertoire of mRNAs and, together with other initiation factors, stimulates binding of mRNA and methionyl-tRNAi to the 40S ribosome. The eIF-3 complex specifically targets and initiates translation of a subset of mRNAs involved in cell proliferation. This is Eukaryotic translation initiation factor 3 subunit B from Aedes aegypti (Yellowfever mosquito).